The chain runs to 322 residues: Transaldolase (322 aa).

Catalysis depends on Lys-136, which acts as the Schiff-base intermediate with substrate.

It belongs to the transaldolase family. Type 1 subfamily. In terms of assembly, homodimer.

It is found in the cytoplasm. The catalysed reaction is D-sedoheptulose 7-phosphate + D-glyceraldehyde 3-phosphate = D-erythrose 4-phosphate + beta-D-fructose 6-phosphate. Its pathway is carbohydrate degradation; pentose phosphate pathway; D-glyceraldehyde 3-phosphate and beta-D-fructose 6-phosphate from D-ribose 5-phosphate and D-xylulose 5-phosphate (non-oxidative stage): step 2/3. Transaldolase is important for the balance of metabolites in the pentose-phosphate pathway. In Xanthomonas oryzae pv. oryzae (strain KACC10331 / KXO85), this protein is Transaldolase.